Reading from the N-terminus, the 132-residue chain is Agouti-signaling protein (132 aa).

The signal sequence occupies residues 1 to 22; it reads MDVTRLLLATLLVFLCFFTAYS. Asn39 is a glycosylation site (N-linked (GlcNAc...) asparagine). The segment at 61-87 is disordered; it reads QISRKEAEKKRSSKKEASMKKVARPRT. Residues 63–79 are compositionally biased toward basic and acidic residues; sequence SRKEAEKKRSSKKEASM. 5 cysteine pairs are disulfide-bonded: Cys93–Cys108, Cys100–Cys114, Cys107–Cys125, Cys111–Cys132, and Cys116–Cys123. The Agouti domain maps to 93–132; the sequence is CVATRDSCKPPAPACCDPCASCQCRFFRSACSCRVLSLNC.

It is found in the secreted. Involved in the regulation of melanogenesis. The binding of ASP to MC1R precludes alpha-MSH initiated signaling and thus blocks production of cAMP, leading to a down-regulation of eumelanogenesis (brown/black pigment) and thus increasing synthesis of pheomelanin (yellow/red pigment). This chain is Agouti-signaling protein (ASIP), found in Macaca maura (Moor macaque).